The sequence spans 190 residues: Peptidyl-prolyl cis-trans isomerase A (190 aa).

Residues 1–23 (MSKRILAAVVTVLSLTAFSPAFA) form the signal peptide. In terms of domain architecture, PPIase cyclophilin-type spans 26–187 (TSTHVLLTTS…KPIVIQSAKI (162 aa)).

The protein belongs to the cyclophilin-type PPIase family.

The protein resides in the periplasm. The catalysed reaction is [protein]-peptidylproline (omega=180) = [protein]-peptidylproline (omega=0). Functionally, PPIases accelerate the folding of proteins. It catalyzes the cis-trans isomerization of proline imidic peptide bonds in oligopeptides. In Dickeya dadantii (strain 3937) (Erwinia chrysanthemi (strain 3937)), this protein is Peptidyl-prolyl cis-trans isomerase A (rotA).